The primary structure comprises 729 residues: MAESDFDKTQYIIPNEANINFLECRTAFGGLTEKEKCYAHYLYKASWEGALICLLQTSPEAPGIFLLFQKLFSSESVGSLKEKALKSSVAPTEEEFTSFLTYVAAFYGNIGNYKSFGDTKFIPNLPKEKFQTIVFSSQAYATNAKSVVTLWSDCCEAMYSLKPKLRQLGFGEQGISTYYSSNCNKSDAEFIQGFLKEKNIEGWNTRLFKEINDKGHVTYNLRLASTALSAEDCSAEKKDDVASLVKSYEYQGTTVKITRGDYAGLLKKVVDNLIMAKGFASNENEVAMLDHYVHSFTTGSVEAHKDGSRHWIRDKGPVVETYIGFIESYRDPFGVRAEYEGFVSIVNKSMSAKFADLVSSAETLLPQLPWPSSYEKDTFLRPDFTSLDVLGFGSSGIPAGINIPNYDEIRQDEGFKNVSLGNVLSAHSADQKITFLTEEDAELYSKLKAPSFEVQVGLHELLGHGSGKLFIKKPDGSYNFDHKSVVNTETGEKIQSWYTEGETWSTKFAELSSSYEECRAECVGIYLCLNKDVLRIFGHEGAAGDDIVYVNWLNMVRAGLLGLEFYTPENNKWRQAHMQARYVILRVLLEAGEQLVQLTRIAGSDGKPDILVTLDRNKISCVGQPAIGAFLRKLQVFKSTADYASGKDLYDKYSAVDAHFLEMRNIVLARKTPRRMFVQSHTTIQDGVVSLKEFEASASGMIASFIARFPGDDPVLEKLWRDDLPYHQY.

Histidine 459 lines the Zn(2+) pocket. Glutamate 460 is a catalytic residue. Positions 464 and 517 each coordinate Zn(2+).

The protein belongs to the peptidase M49 family. Requires Zn(2+) as cofactor.

It is found in the cytoplasm. It catalyses the reaction Release of an N-terminal dipeptide from a peptide comprising four or more residues, with broad specificity. Also acts on dipeptidyl 2-naphthylamides.. This Nematostella vectensis (Starlet sea anemone) protein is Dipeptidyl peptidase 3 (dpp3).